The primary structure comprises 756 residues: Xylosyl- and glucuronyltransferase LARGE1 (756 aa).

At 1–10 the chain is on the cytoplasmic side; that stretch reads MLGICRGRRK. Residues 11–31 traverse the membrane as a helical; Signal-anchor for type II membrane protein segment; the sequence is FLAASLSLLCIPAITWIYLFS. Residues 32 to 756 lie on the Lumenal side of the membrane; that stretch reads GSFEDGKPVS…LKYLTAENNS (725 aa). 2 disordered regions span residues 43–69 and 81–109; these read SPLESQAHSPRYTASSQRERESLEVRM and RQLSLAQGRAPSHRRGNHSKTYSMEEGTG. Positions 44–58 are enriched in polar residues; it reads PLESQAHSPRYTASS. Residues 53 to 95 are a coiled coil; that stretch reads RYTASSQRERESLEVRMREVEEENRALRRQLSLAQGRAPSHRR. A compositionally biased stretch (basic and acidic residues) spans 59–69; it reads QRERESLEVRM. N-linked (GlcNAc...) asparagine glycosylation is found at Asn-97, Asn-122, and Asn-148. Positions 138–413 are xylosyltransferase activity; the sequence is IHVAIVCAGY…FLEYDGNLLR (276 aa). Asp-242 and Asp-244 together coordinate Mn(2+). Asn-272 is a glycosylation site (N-linked (GlcNAc...) asparagine). Residues 414 to 756 are glucuronyltransferase activity; the sequence is RELFGCPSEA…LKYLTAENNS (343 aa). Mn(2+) is bound by residues Asp-563 and Asp-565.

The protein in the C-terminal section; belongs to the glycosyltransferase 49 family. This sequence in the N-terminal section; belongs to the glycosyltransferase 8 family. Interacts with DAG1 (via the N-terminal domain of alpha-DAG1); the interaction increases binding of DAG1 to laminin. Interacts with B4GAT1. It depends on Mn(2+) as a cofactor. Ubiquitous. Highest expression in heart, brain and skeletal muscle.

The protein resides in the golgi apparatus membrane. It catalyses the reaction 3-O-[beta-D-GlcA-(1-&gt;3)-beta-D-Xyl-(1-&gt;4)-Rib-ol-P-Rib-ol-P-3-beta-D-GalNAc-(1-&gt;3)-beta-D-GlcNAc-(1-&gt;4)-(O-6-P-alpha-D-Man)]-Thr-[protein] + UDP-alpha-D-xylose = 3-O-[alpha-D-Xyl-(1-&gt;3)-beta-D-GlcA-(1-&gt;4)-beta-D-Xyl-(1-&gt;4)-Rib-ol-P-Rib-ol-P-3-beta-D-GalNAc-(1-&gt;3)-beta-D-GlcNAc-(1-&gt;4)-(O-6-P-alpha-D-Man)]-Thr-[protein] + UDP + H(+). The catalysed reaction is 3-O-{(1-&gt;[3)-alpha-D-Xyl-(1-&gt;3)-beta-D-GlcA-(1-&gt;](n)-4)-beta-D-Xyl-(1-&gt;4)-Rib-ol-P-Rib-ol-P-3-beta-D-GalNAc-(1-&gt;3)-beta-D-GlcNAc-(1-&gt;4)-O-6-P-alpha-D-Man}-L-Thr-[protein] + UDP-alpha-D-glucuronate = 3-O-{beta-D-GlcA-(1-&gt;[3)-alpha-D-Xyl-(1-&gt;3)-beta-D-GlcA-(1-&gt;](n)-4)-beta-D-Xyl-(1-&gt;4)-Rib-ol-P-Rib-ol-P-3-beta-D-GalNAc-(1-&gt;3)-beta-D-GlcNAc-(1-&gt;4)-O-6-P-alpha-D-Man}-L-Thr-[protein] + UDP + H(+). It carries out the reaction 3-O-{beta-D-GlcA-(1-&gt;[3)-alpha-D-Xyl-(1-&gt;3)-beta-D-GlcA-(1-&gt;](n)-4)-beta-D-Xyl-(1-&gt;4)-Rib-ol-P-Rib-ol-P-3-beta-D-GalNAc-(1-&gt;3)-beta-D-GlcNAc-(1-&gt;4)-O-6-P-alpha-D-Man}-L-Thr-[protein] + UDP-alpha-D-xylose = 3-O-{(1-&gt;[3)-alpha-D-Xyl-(1-&gt;3)-beta-D-GlcA-(1-&gt;](n+1)-4)-beta-D-Xyl-(1-&gt;4)-Rib-ol-P-Rib-ol-P-3-beta-D-GalNAc-(1-&gt;3)-beta-D-GlcNAc-(1-&gt;4)-O-6-P-alpha-D-Man}-L-Thr-[protein] + UDP + H(+). It functions in the pathway protein modification; protein glycosylation. In terms of biological role, bifunctional glycosyltransferase with both alpha-1,3-xylosyltransferase and beta-1,3-glucuronyltransferase activities involved in the maturation of alpha-dystroglycan (DAG1) by glycosylation leading to DAG1 binding to laminin G-like domain-containing extracellular proteins with high affinity. Elongates the glucuronyl-beta-1,4-xylose-beta disaccharide primer structure initiated by B4GAT1 by adding repeating units [-3-Xylose-alpha-1,3-GlcA-beta-1-] to produce a heteropolysaccharide. Requires the phosphorylation of core M3 (O-mannosyl trisaccharide) by POMK to elongate the glucuronyl-beta-1,4-xylose-beta disaccharide primer. Plays a key role in skeletal muscle function and regeneration. This chain is Xylosyl- and glucuronyltransferase LARGE1, found in Homo sapiens (Human).